The primary structure comprises 33 residues: Brevinin-2 (33 aa).

A disulfide bond links C27 and C33.

It belongs to the frog skin active peptide (FSAP) family. Brevinin subfamily. In terms of tissue distribution, expressed by the skin glands.

It localises to the secreted. Functionally, shows antibacterial activity against representative Gram-negative and Gram-positive bacterial species, and a very high hemolytic activity. This is Brevinin-2 from Pelophylax porosus brevipodus (Nagoya Daruma pond frog).